Here is a 332-residue protein sequence, read N- to C-terminus: Putative D-threonate 4-phosphate dehydrogenase (332 aa).

His138 and Thr139 together coordinate substrate. Residues His168, His211, and His266 each contribute to the a divalent metal cation site. Substrate-binding residues include Lys274 and Arg292.

This sequence belongs to the PdxA family. PdxA2 subfamily. In terms of assembly, homodimer. Requires a divalent metal cation as cofactor.

The catalysed reaction is 4-O-phospho-D-threonate + NAD(+) = dihydroxyacetone phosphate + CO2 + NADH. Its function is as follows. Catalyzes the NAD-dependent oxidation and subsequent decarboxylation of D-threonate 4-phosphate to produce dihydroxyacetone phosphate (DHAP). In Fusobacterium nucleatum subsp. nucleatum (strain ATCC 25586 / DSM 15643 / BCRC 10681 / CIP 101130 / JCM 8532 / KCTC 2640 / LMG 13131 / VPI 4355), this protein is Putative D-threonate 4-phosphate dehydrogenase.